A 216-amino-acid polypeptide reads, in one-letter code: ATP-dependent Clp protease proteolytic subunit 3 (216 aa).

Serine 120 serves as the catalytic Nucleophile. Histidine 145 is a catalytic residue.

It belongs to the peptidase S14 family. In terms of assembly, fourteen ClpP subunits assemble into 2 heptameric rings which stack back to back to give a disk-like structure with a central cavity, resembling the structure of eukaryotic proteasomes.

It localises to the cytoplasm. The catalysed reaction is Hydrolysis of proteins to small peptides in the presence of ATP and magnesium. alpha-casein is the usual test substrate. In the absence of ATP, only oligopeptides shorter than five residues are hydrolyzed (such as succinyl-Leu-Tyr-|-NHMec, and Leu-Tyr-Leu-|-Tyr-Trp, in which cleavage of the -Tyr-|-Leu- and -Tyr-|-Trp bonds also occurs).. Cleaves peptides in various proteins in a process that requires ATP hydrolysis. Has a chymotrypsin-like activity. Plays a major role in the degradation of misfolded proteins. The chain is ATP-dependent Clp protease proteolytic subunit 3 from Prochlorococcus marinus (strain SARG / CCMP1375 / SS120).